The primary structure comprises 1126 residues: Protein translocase subunit SecA (1126 aa).

ATP contacts are provided by residues glutamine 175, 193 to 197 (GEGKT), and aspartate 694. The interval 1060 to 1126 (VQEAAPEKHE…KYKNCHGQGL (67 aa)) is disordered. Residues 1064–1080 (APEKHEDMSRYRTEKTD) are compositionally biased toward basic and acidic residues. Positions 1110, 1112, 1121, and 1122 each coordinate Zn(2+).

This sequence belongs to the SecA family. As to quaternary structure, monomer and homodimer. Part of the essential Sec protein translocation apparatus which comprises SecA, SecYEG and auxiliary proteins SecDF. Other proteins may also be involved. Requires Zn(2+) as cofactor.

It is found in the cell inner membrane. The protein localises to the cytoplasm. It carries out the reaction ATP + H2O + cellular proteinSide 1 = ADP + phosphate + cellular proteinSide 2.. Its function is as follows. Part of the Sec protein translocase complex. Interacts with the SecYEG preprotein conducting channel. Has a central role in coupling the hydrolysis of ATP to the transfer of proteins into and across the cell membrane, serving as an ATP-driven molecular motor driving the stepwise translocation of polypeptide chains across the membrane. The polypeptide is Protein translocase subunit SecA (Parabacteroides distasonis (strain ATCC 8503 / DSM 20701 / CIP 104284 / JCM 5825 / NCTC 11152)).